The chain runs to 165 residues: CDP-archaeol synthase (165 aa).

3 helical membrane-spanning segments follow: residues isoleucine 4 to alanine 24, leucine 78 to valine 98, and phenylalanine 118 to leucine 138.

Belongs to the CDP-archaeol synthase family. The cofactor is Mg(2+).

It is found in the cell membrane. The enzyme catalyses 2,3-bis-O-(geranylgeranyl)-sn-glycerol 1-phosphate + CTP + H(+) = CDP-2,3-bis-O-(geranylgeranyl)-sn-glycerol + diphosphate. The protein operates within membrane lipid metabolism; glycerophospholipid metabolism. In terms of biological role, catalyzes the formation of CDP-2,3-bis-(O-geranylgeranyl)-sn-glycerol (CDP-archaeol) from 2,3-bis-(O-geranylgeranyl)-sn-glycerol 1-phosphate (DGGGP) and CTP. This reaction is the third ether-bond-formation step in the biosynthesis of archaeal membrane lipids. The polypeptide is CDP-archaeol synthase (Pyrobaculum calidifontis (strain DSM 21063 / JCM 11548 / VA1)).